The following is a 597-amino-acid chain: Elongation factor 4 (597 aa).

The 183-residue stretch at 2-184 (KHIRNFSIIA…NIVSAIPAPE (183 aa)) folds into the tr-type G domain. GTP-binding positions include 14-19 (DHGKST) and 131-134 (NKID).

It belongs to the TRAFAC class translation factor GTPase superfamily. Classic translation factor GTPase family. LepA subfamily.

The protein localises to the cell inner membrane. The enzyme catalyses GTP + H2O = GDP + phosphate + H(+). Functionally, required for accurate and efficient protein synthesis under certain stress conditions. May act as a fidelity factor of the translation reaction, by catalyzing a one-codon backward translocation of tRNAs on improperly translocated ribosomes. Back-translocation proceeds from a post-translocation (POST) complex to a pre-translocation (PRE) complex, thus giving elongation factor G a second chance to translocate the tRNAs correctly. Binds to ribosomes in a GTP-dependent manner. This chain is Elongation factor 4, found in Vibrio campbellii (strain ATCC BAA-1116).